A 1048-amino-acid chain; its full sequence is Integrin alpha-V (1048 aa).

A signal peptide spans methionine 1–alanine 30. The Extracellular segment spans residues phenylalanine 31–valine 992. 7 FG-GAP repeats span residues asparagine 32–glutamine 98, aspartate 109–alanine 170, arginine 173–tyrosine 225, glutamine 237–methionine 291, serine 292–glutamine 357, threonine 358–alanine 415, and glutamine 419–serine 482. A glycan (N-linked (GlcNAc...) asparagine) is linked at asparagine 74. 3 disulfides stabilise this stretch: cysteine 89-cysteine 97, cysteine 138-cysteine 158, and cysteine 172-cysteine 185. Ca(2+) is bound by residues aspartate 260, asparagine 262, aspartate 264, isoleucine 266, and aspartate 268. N-linked (GlcNAc...) asparagine glycans are attached at residues asparagine 290 and asparagine 296. Residues aspartate 314, asparagine 316, aspartate 318, tyrosine 320, aspartate 322, aspartate 379, aspartate 381, aspartate 383, phenylalanine 385, aspartate 387, aspartate 443, aspartate 445, asparagine 447, tyrosine 449, and aspartate 451 each contribute to the Ca(2+) site. N-linked (GlcNAc...) asparagine glycosylation occurs at asparagine 488. Intrachain disulfides connect cysteine 491/cysteine 502 and cysteine 508/cysteine 565. Asparagine 554 and asparagine 615 each carry an N-linked (GlcNAc...) asparagine glycan. 2 cysteine pairs are disulfide-bonded: cysteine 626–cysteine 632 and cysteine 698–cysteine 711. 4 N-linked (GlcNAc...) asparagine glycosylation sites follow: asparagine 704, asparagine 835, asparagine 851, and asparagine 874. Intrachain disulfides connect cysteine 852-cysteine 914 and cysteine 904-cysteine 909. 3 N-linked (GlcNAc...) asparagine glycosylation sites follow: asparagine 945, asparagine 973, and asparagine 980. A helical membrane pass occupies residues proline 993–tyrosine 1016. Residues arginine 1017–threonine 1048 lie on the Cytoplasmic side of the membrane. Positions glycine 1019–arginine 1023 match the GFFKR motif motif. The segment covering proline 1027–glycine 1042 has biased composition (basic and acidic residues). Residues proline 1027–threonine 1048 form a disordered region.

Belongs to the integrin alpha chain family. In terms of assembly, heterodimer of an alpha and a beta subunit. The alpha subunit is composed of a heavy and a light chain linked by a disulfide bond. Alpha-V (ITGAV) associates with either beta-1 (ITGB1), beta-3 (ITGB3), beta-5 (ITGB5), beta-6 (ITGB6) or beta-8 (ITGB8). Interacts with RAB25. Interacts with CIB1. Integrins ITGAV:ITGB3 and ITGAV:ITGB5 interact with FBLN5 (via N-terminus). ITGAV:ITGB3 and ITGAV:ITGB5 interact with CCN3. ITGAV:ITGB3 interacts with ADGRA2. ITGAV:ITGB3 interacts with FGF2; it is likely that FGF2 can simultaneously bind ITGAV:ITGB3 and FGF receptors. ITGAV:ITGB3 interacts with SELP (via C-type lectin domain); the interaction mediates cell-cell interaction and adhesion. ITGAV:ITGB3 is found in a ternary complex with CX3CR1 and CX3CL1. ITGAV:ITGB3 is found in a ternary complex with NRG1 and ERBB3. ITGAV:ITGB3 is found in a ternary complex with FGF1 and FGFR1. ITGAV:ITGB3 is found in a ternary complex with IGF1 and IGF1R. ITGAV:ITGB3 interacts with IGF2. ITGAV:ITGB3 and ITGAV:ITGB6 interact with FBN1. ITGAV:ITGB3 interacts with CD9, CD81 and CD151 (via second extracellular domain). ITGAV:ITGB6 interacts with TGFB1. ITGAV:ITGB3 interacts with PTN. Forms a complex with PTPRZ1 and PTN that stimulates endothelial cell migration through ITGB3 'Tyr-773' phosphorylation. Interacts with TM4SF19. (Microbial infection) Alpha-V/beta-6 and alpha-V/beta-3 bind to foot-and-mouth disease virus (FMDV) VP1 protein and acts as a receptor for this virus.

The protein resides in the cell membrane. It is found in the cell junction. The protein localises to the focal adhesion. Its function is as follows. The alpha-V (ITGAV) integrins are receptors for vitronectin, cytotactin, fibronectin, fibrinogen, laminin, matrix metalloproteinase-2, osteopontin, osteomodulin, prothrombin, thrombospondin, TGFB1 and vWF. They recognize the sequence R-G-D in a wide array of ligands. Alpha-V integrins may play a role in embryo implantation, angiogenesis and wound healing. ITGAV:ITGB3 binds to fractalkine (CX3CL1) and may act as its coreceptor in CX3CR1-dependent fractalkine signaling. ITGAV:ITGB3 binds to NRG1 (via EGF domain) and this binding is essential for NRG1-ERBB signaling. ITGAV:ITGB3 binds to FGF1 and this binding is essential for FGF1 signaling. ITGAV:ITGB3 binds to FGF2 and this binding is essential for FGF2 signaling. ITGAV:ITGB3 binds to IGF1 and this binding is essential for IGF1 signaling. ITGAV:ITGB3 binds to IGF2 and this binding is essential for IGF2 signaling. ITGAV:ITGB3 binds to IL1B and this binding is essential for IL1B signaling. ITGAV:ITGB3 binds to PLA2G2A via a site (site 2) which is distinct from the classical ligand-binding site (site 1) and this induces integrin conformational changes and enhanced ligand binding to site 1. ITGAV:ITGB3 and ITGAV:ITGB6 act as receptors for fibrillin-1 (FBN1) and mediate R-G-D-dependent cell adhesion to FBN1. Integrin alpha-V/beta-6 or alpha-V/beta-8 (ITGAV:ITGB6 or ITGAV:ITGB8) mediates R-G-D-dependent release of transforming growth factor beta-1 (TGF-beta-1) from regulatory Latency-associated peptide (LAP), thereby playing a key role in TGF-beta-1 activation. ITGAV:ITGB3 acts as a receptor for CD40LG. ITGAV:ITGB3 acts as a receptor for IBSP and promotes cell adhesion and migration to IBSP. The protein is Integrin alpha-V (ITGAV) of Bos taurus (Bovine).